The chain runs to 264 residues: 3-methyl-2-oxobutanoate hydroxymethyltransferase (264 aa).

Mg(2+)-binding residues include D45 and D84. 3-methyl-2-oxobutanoate-binding positions include 45 to 46 (DS), D84, and K112. Mg(2+) is bound at residue E114. Residue E181 is the Proton acceptor of the active site.

Belongs to the PanB family. In terms of assembly, homodecamer; pentamer of dimers. The cofactor is Mg(2+).

It is found in the cytoplasm. The enzyme catalyses 3-methyl-2-oxobutanoate + (6R)-5,10-methylene-5,6,7,8-tetrahydrofolate + H2O = 2-dehydropantoate + (6S)-5,6,7,8-tetrahydrofolate. Its pathway is cofactor biosynthesis; (R)-pantothenate biosynthesis; (R)-pantoate from 3-methyl-2-oxobutanoate: step 1/2. In terms of biological role, catalyzes the reversible reaction in which hydroxymethyl group from 5,10-methylenetetrahydrofolate is transferred onto alpha-ketoisovalerate to form ketopantoate. The chain is 3-methyl-2-oxobutanoate hydroxymethyltransferase from Shewanella sediminis (strain HAW-EB3).